Consider the following 334-residue polypeptide: tRNA uridine(34) hydroxylase (334 aa).

The Rhodanese domain maps to 123–217 (SDPDVILVDT…YLEEVKAEES (95 aa)). Cys177 (cysteine persulfide intermediate) is an active-site residue.

It belongs to the TrhO family.

The enzyme catalyses uridine(34) in tRNA + AH2 + O2 = 5-hydroxyuridine(34) in tRNA + A + H2O. In terms of biological role, catalyzes oxygen-dependent 5-hydroxyuridine (ho5U) modification at position 34 in tRNAs. This chain is tRNA uridine(34) hydroxylase, found in Shewanella baltica (strain OS223).